Reading from the N-terminus, the 568-residue chain is uncharacterized protein (568 aa).

A compositionally biased stretch (basic and acidic residues) spans 334 to 346 (DDNEEKNNDRPKI). Disordered regions lie at residues 334-382 (DDNE…NDQN) and 436-479 (QVEE…SCKN). Residues 458-477 (KIASSASKNDNSNNKNSKSC) are compositionally biased toward low complexity.

To yeast YJL043w.

This is an uncharacterized protein from Saccharomyces cerevisiae (strain ATCC 204508 / S288c) (Baker's yeast).